The primary structure comprises 305 residues: UDP-3-O-acyl-N-acetylglucosamine deacetylase (305 aa).

His79, His238, and Asp242 together coordinate Zn(2+). The Proton donor role is filled by His265.

The protein belongs to the LpxC family. The cofactor is Zn(2+).

It carries out the reaction a UDP-3-O-[(3R)-3-hydroxyacyl]-N-acetyl-alpha-D-glucosamine + H2O = a UDP-3-O-[(3R)-3-hydroxyacyl]-alpha-D-glucosamine + acetate. The protein operates within glycolipid biosynthesis; lipid IV(A) biosynthesis; lipid IV(A) from (3R)-3-hydroxytetradecanoyl-[acyl-carrier-protein] and UDP-N-acetyl-alpha-D-glucosamine: step 2/6. Its function is as follows. Catalyzes the hydrolysis of UDP-3-O-myristoyl-N-acetylglucosamine to form UDP-3-O-myristoylglucosamine and acetate, the committed step in lipid A biosynthesis. The polypeptide is UDP-3-O-acyl-N-acetylglucosamine deacetylase (Escherichia fergusonii (strain ATCC 35469 / DSM 13698 / CCUG 18766 / IAM 14443 / JCM 21226 / LMG 7866 / NBRC 102419 / NCTC 12128 / CDC 0568-73)).